The following is a 365-amino-acid chain: DNA replication and repair protein RecF (365 aa).

Gly30–Thr37 contacts ATP.

Belongs to the RecF family.

It localises to the cytoplasm. Its function is as follows. The RecF protein is involved in DNA metabolism; it is required for DNA replication and normal SOS inducibility. RecF binds preferentially to single-stranded, linear DNA. It also seems to bind ATP. In Streptococcus pneumoniae (strain CGSP14), this protein is DNA replication and repair protein RecF.